The primary structure comprises 502 residues: Probable cytochrome P450 28d1 (502 aa).

A heme-binding site is contributed by Cys-446.

The protein belongs to the cytochrome P450 family. Heme is required as a cofactor.

It is found in the endoplasmic reticulum membrane. The protein resides in the microsome membrane. Its function is as follows. May be involved in the metabolism of insect hormones and in the breakdown of synthetic insecticides. This Drosophila melanogaster (Fruit fly) protein is Probable cytochrome P450 28d1 (Cyp28d1).